A 644-amino-acid chain; its full sequence is Biosynthetic arginine decarboxylase (644 aa).

At Lys113 the chain carries N6-(pyridoxal phosphate)lysine. 293-303 (FDVGGGLGVDY) is a binding site for substrate.

Belongs to the Orn/Lys/Arg decarboxylase class-II family. SpeA subfamily. Mg(2+) serves as cofactor. The cofactor is pyridoxal 5'-phosphate.

The catalysed reaction is L-arginine + H(+) = agmatine + CO2. Its function is as follows. Catalyzes the biosynthesis of agmatine from arginine. The chain is Biosynthetic arginine decarboxylase from Pasteurella multocida (strain Pm70).